The following is a 240-amino-acid chain: Nuclear receptor-interacting protein 3 (240 aa).

The polypeptide is Nuclear receptor-interacting protein 3 (Nrip3) (Mus musculus (Mouse)).